The sequence spans 346 residues: Probable choline kinase 1 (346 aa).

ATP is bound by residues R73, Q210, and D227.

This sequence belongs to the choline/ethanolamine kinase family. In terms of tissue distribution, expressed in roots. Expressed at low levels in cauline leaves and flowers.

It catalyses the reaction choline + ATP = phosphocholine + ADP + H(+). The protein operates within phospholipid metabolism; phosphatidylcholine biosynthesis; phosphocholine from choline: step 1/1. Involved in phospholipid biosynthesis. Catalyzes the first step in phosphatidylcholine biosynthesis. The protein is Probable choline kinase 1 (CK1) of Arabidopsis thaliana (Mouse-ear cress).